We begin with the raw amino-acid sequence, 87 residues long: Small ribosomal subunit protein bS18 (87 aa).

Residues 1-21 (MRHKPTPPKGNKSLGNALASK) are disordered.

This sequence belongs to the bacterial ribosomal protein bS18 family. In terms of assembly, part of the 30S ribosomal subunit. Forms a tight heterodimer with protein bS6.

In terms of biological role, binds as a heterodimer with protein bS6 to the central domain of the 16S rRNA, where it helps stabilize the platform of the 30S subunit. This chain is Small ribosomal subunit protein bS18, found in Chlorobium phaeobacteroides (strain DSM 266 / SMG 266 / 2430).